Consider the following 212-residue polypeptide: Uridine kinase (212 aa).

G13 to T20 serves as a coordination point for ATP.

It belongs to the uridine kinase family.

It is found in the cytoplasm. The catalysed reaction is uridine + ATP = UMP + ADP + H(+). It carries out the reaction cytidine + ATP = CMP + ADP + H(+). It functions in the pathway pyrimidine metabolism; CTP biosynthesis via salvage pathway; CTP from cytidine: step 1/3. It participates in pyrimidine metabolism; UMP biosynthesis via salvage pathway; UMP from uridine: step 1/1. The polypeptide is Uridine kinase (Bacillus anthracis (strain A0248)).